Reading from the N-terminus, the 164-residue chain is B-phycoerythrin alpha chain (164 aa).

(2R,3E)-phycoerythrobilin contacts are provided by cysteine 82 and cysteine 139.

Belongs to the phycobiliprotein family. In terms of assembly, heteromer of 6 alpha, 6 beta and one gamma chain. In terms of processing, contains two covalently linked bilin chromophores.

The protein localises to the plastid. Its subcellular location is the chloroplast thylakoid membrane. Functionally, light-harvesting photosynthetic bile pigment-protein from the phycobiliprotein complex. In Porphyridium sordidum (Red alga), this protein is B-phycoerythrin alpha chain (cpeA).